The chain runs to 115 residues: DNA-binding protein Ta0052 (115 aa).

The interval 1 to 41 (MDDDEELERIRRQQLESMQRQAMQEQMREEQEKQREAERAR) is disordered. Low complexity predominate over residues 15-25 (LESMQRQAMQE). Residues 26-41 (QMREEQEKQREAERAR) show a composition bias toward basic and acidic residues.

Belongs to the PDCD5 family.

The sequence is that of DNA-binding protein Ta0052 from Thermoplasma acidophilum (strain ATCC 25905 / DSM 1728 / JCM 9062 / NBRC 15155 / AMRC-C165).